Here is a 179-residue protein sequence, read N- to C-terminus: ATP-dependent protease subunit HslV (179 aa).

The active site involves Thr8. 3 residues coordinate Na(+): Gly163, Cys166, and Thr169.

The protein belongs to the peptidase T1B family. HslV subfamily. In terms of assembly, a double ring-shaped homohexamer of HslV is capped on each side by a ring-shaped HslU homohexamer. The assembly of the HslU/HslV complex is dependent on binding of ATP.

The protein resides in the cytoplasm. The enzyme catalyses ATP-dependent cleavage of peptide bonds with broad specificity.. Its activity is regulated as follows. Allosterically activated by HslU binding. Functionally, protease subunit of a proteasome-like degradation complex believed to be a general protein degrading machinery. This Solibacter usitatus (strain Ellin6076) protein is ATP-dependent protease subunit HslV.